An 89-amino-acid chain; its full sequence is Cell division topological specificity factor (89 aa).

This sequence belongs to the MinE family.

In terms of biological role, prevents the cell division inhibition by proteins MinC and MinD at internal division sites while permitting inhibition at polar sites. This ensures cell division at the proper site by restricting the formation of a division septum at the midpoint of the long axis of the cell. In Pectobacterium atrosepticum (strain SCRI 1043 / ATCC BAA-672) (Erwinia carotovora subsp. atroseptica), this protein is Cell division topological specificity factor.